A 506-amino-acid polypeptide reads, in one-letter code: Maturase K (506 aa).

The protein belongs to the intron maturase 2 family. MatK subfamily.

Its subcellular location is the plastid. It localises to the chloroplast. Functionally, usually encoded in the trnK tRNA gene intron. Probably assists in splicing its own and other chloroplast group II introns. The polypeptide is Maturase K (Rhododendron tsusiophyllum (Rhododendron)).